Here is a 513-residue protein sequence, read N- to C-terminus: Aspartic proteinase A2 (513 aa).

The first 24 residues, 1–24 (MGVYSRAVAFSVFVSFLLFFTAYS), serve as a signal peptide directing secretion. Residues 25–71 (KRNDGTFRVGLKKLKLDPNNRLATRFGSKQEEALRSSLRSYNNNLGG) constitute a propeptide, activation peptide. Positions 89–510 (YYGEIAIGTP…DFGNEQVGFA (422 aa)) constitute a Peptidase A1 domain. Aspartate 107 is an active-site residue. Cystine bridges form between cysteine 120–cysteine 126 and cysteine 285–cysteine 289. Residue aspartate 294 is part of the active site. The 106-residue stretch at 319–424 (VVSQQCKTVV…NEICERMPSP (106 aa)) folds into the Saposin B-type domain. 4 disulfide bridges follow: cysteine 324-cysteine 418, cysteine 349-cysteine 390, cysteine 355-cysteine 387, and cysteine 432-cysteine 469. Asparagine 404 is a glycosylation site (N-linked (GlcNAc...) asparagine).

It belongs to the peptidase A1 family. Expressed in seed pods and dry seeds.

Its subcellular location is the vacuole. Functionally, involved in the breakdown of propeptides of storage proteins in protein-storage vacuoles. The polypeptide is Aspartic proteinase A2 (APA2) (Arabidopsis thaliana (Mouse-ear cress)).